A 400-amino-acid chain; its full sequence is MSSKLVLVLNCGSSSLKFAIIDAINGEEYLSGLAECFNLPEARIKWKMDGGKHDAELGAGAAHSEALNFIVNTILSQKPELSAQLVAIGHRIVHGGEKFTQSAIITDDVLQGIKDSVPFAPLHNPAHLIGIEEALKSFPHLADKNVAVFDTAFHQTMPEESYLYALPYKLYKENHIRRYGFHGTSHYFVSREAAKVLNKPVEELNVITCHLGNGGSVTAIRNGECVDTSMGLTPLEGLVMGTRCGDIDPAVIFHLHDALGMDVASINKLLTKESGLQGLTEVTSDCRYVEDNYETKADAKRAMDVYCHRLAKYIGSYSALMEGRLDAVIFTGGIGENAAMVRELSLKKLGLLGFDVDHERNLAARFGKGGNIAKDGTRPALVIPTNEELVIAEDAYRLTA.

N10 is a binding site for Mg(2+). Residue K17 participates in ATP binding. A substrate-binding site is contributed by R91. D150 (proton donor/acceptor) is an active-site residue. Residues 210–214 (HLGNG), 285–287 (DCR), and 333–337 (GIGEN) each bind ATP. Residue E387 coordinates Mg(2+).

Belongs to the acetokinase family. As to quaternary structure, homodimer. It depends on Mg(2+) as a cofactor. Requires Mn(2+) as cofactor.

Its subcellular location is the cytoplasm. The enzyme catalyses acetate + ATP = acetyl phosphate + ADP. The protein operates within metabolic intermediate biosynthesis; acetyl-CoA biosynthesis; acetyl-CoA from acetate: step 1/2. In terms of biological role, catalyzes the formation of acetyl phosphate from acetate and ATP. Can also catalyze the reverse reaction. The protein is Acetate kinase of Pectobacterium carotovorum subsp. carotovorum (strain PC1).